The sequence spans 876 residues: Phosphoenolpyruvate carboxylase (876 aa).

Catalysis depends on residues His138 and Lys543.

It belongs to the PEPCase type 1 family. Requires Mg(2+) as cofactor.

The enzyme catalyses oxaloacetate + phosphate = phosphoenolpyruvate + hydrogencarbonate. In terms of biological role, forms oxaloacetate, a four-carbon dicarboxylic acid source for the tricarboxylic acid cycle. The sequence is that of Phosphoenolpyruvate carboxylase from Aliivibrio salmonicida (strain LFI1238) (Vibrio salmonicida (strain LFI1238)).